We begin with the raw amino-acid sequence, 322 residues long: Large ribosomal subunit protein uL10 (322 aa).

The disordered stretch occupies residues 294-322 (APAAAAKAEKEEEPAEESDDEMGFGLFDE). A compositionally biased stretch (acidic residues) spans 304–322 (EEEPAEESDDEMGFGLFDE).

The protein belongs to the universal ribosomal protein uL10 family. As to quaternary structure, P0 forms a pentameric complex by interaction with dimers of P1 and P2. In terms of processing, phosphorylated.

In terms of biological role, ribosomal protein P0 is the functional equivalent of E.coli protein L10. In Lupinus luteus (European yellow lupine), this protein is Large ribosomal subunit protein uL10.